The chain runs to 177 residues: 2-C-methyl-D-erythritol 2,4-cyclodiphosphate synthase (177 aa).

The a divalent metal cation site is built by Asp-23 and His-25. 4-CDP-2-C-methyl-D-erythritol 2-phosphate is bound by residues 23–25 (DVH) and 49–50 (HS). An a divalent metal cation-binding site is contributed by His-57. Residues 71 to 73 (DIG), 76 to 80 (FSDTD), 115 to 121 (AQAPRMA), and Arg-157 each bind 4-CDP-2-C-methyl-D-erythritol 2-phosphate.

The protein belongs to the IspF family. Homotrimer. The cofactor is a divalent metal cation.

It catalyses the reaction 4-CDP-2-C-methyl-D-erythritol 2-phosphate = 2-C-methyl-D-erythritol 2,4-cyclic diphosphate + CMP. It participates in isoprenoid biosynthesis; isopentenyl diphosphate biosynthesis via DXP pathway; isopentenyl diphosphate from 1-deoxy-D-xylulose 5-phosphate: step 4/6. In terms of biological role, involved in the biosynthesis of isopentenyl diphosphate (IPP) and dimethylallyl diphosphate (DMAPP), two major building blocks of isoprenoid compounds. Catalyzes the conversion of 4-diphosphocytidyl-2-C-methyl-D-erythritol 2-phosphate (CDP-ME2P) to 2-C-methyl-D-erythritol 2,4-cyclodiphosphate (ME-CPP) with a corresponding release of cytidine 5-monophosphate (CMP). The chain is 2-C-methyl-D-erythritol 2,4-cyclodiphosphate synthase from Nitrosospira multiformis (strain ATCC 25196 / NCIMB 11849 / C 71).